The primary structure comprises 287 residues: Eukaryotic translation initiation factor 3 subunit G (287 aa).

Disordered stretches follow at residues 1–34 (MSKL…KDGT) and 159–184 (TAGG…YVPP). In terms of domain architecture, RRM spans 207–285 (ATLRVTNVSE…LILRVEFAKR (79 aa)).

The protein belongs to the eIF-3 subunit G family. As to quaternary structure, component of the eukaryotic translation initiation factor 3 (eIF-3) complex.

The protein localises to the cytoplasm. Functionally, RNA-binding component of the eukaryotic translation initiation factor 3 (eIF-3) complex, which is involved in protein synthesis of a specialized repertoire of mRNAs and, together with other initiation factors, stimulates binding of mRNA and methionyl-tRNAi to the 40S ribosome. The eIF-3 complex specifically targets and initiates translation of a subset of mRNAs involved in cell proliferation. This subunit can bind 18S rRNA. This is Eukaryotic translation initiation factor 3 subunit G (tif35) from Aspergillus oryzae (strain ATCC 42149 / RIB 40) (Yellow koji mold).